The following is a 433-amino-acid chain: Protein RETICULATA-RELATED 1, chloroplastic (433 aa).

Residues 1–63 (MSISLKISHI…LSSRNLRNRC (63 aa)) constitute a chloroplast transit peptide. Valine 64 bears the N-acetylvaline mark. The segment covering 93–105 (DLEPELDDGDGGD) has biased composition (acidic residues). A disordered region spans residues 93 to 143 (DLEPELDDGDGGDENGNNDGGGNGGNGDGGGGGGDGEGDDGEDEADKAEEK). A compositionally biased stretch (gly residues) spans 110-127 (NDGGGNGGNGDGGGGGGD). The span at 128–139 (GEGDDGEDEADK) shows a compositional bias: acidic residues. Transmembrane regions (helical) follow at residues 249-269 (LYAA…GLLA) and 323-343 (LLYG…ANLI).

Belongs to the RETICULATA family. Expressed in root vasculature, distal region of young leaf primordia, leaf bundle sheath cells, hydathodes and pollen grains.

The protein resides in the plastid. It is found in the chloroplast membrane. Functionally, may play a role in leaf development. This is Protein RETICULATA-RELATED 1, chloroplastic from Arabidopsis thaliana (Mouse-ear cress).